The sequence spans 269 residues: AA9 family lytic polysaccharide monooxygenase I (269 aa).

The N-terminal stretch at 1 to 17 (MFSKKITALALVSAVKA) is a signal peptide. Residues His18 and His103 each coordinate Cu(2+). A disulfide bridge links Cys73 with Cys196. Asn156 carries N-linked (GlcNAc...) asparagine glycosylation. His182 and Gln191 together coordinate O2. Cu(2+) is bound at residue Tyr193.

This sequence belongs to the polysaccharide monooxygenase AA9 family. Cu(2+) is required as a cofactor.

Its subcellular location is the secreted. It carries out the reaction [(1-&gt;4)-beta-D-glucosyl]n+m + reduced acceptor + O2 = 4-dehydro-beta-D-glucosyl-[(1-&gt;4)-beta-D-glucosyl]n-1 + [(1-&gt;4)-beta-D-glucosyl]m + acceptor + H2O.. In terms of biological role, lytic polysaccharide monooxygenase (LPMO) that depolymerizes crystalline and amorphous polysaccharides via the oxidation of scissile alpha- or beta-(1-4)-glycosidic bonds, yielding C1 and C4 oxidation products. Catalysis by LPMOs requires the reduction of the active-site copper from Cu(II) to Cu(I) by a reducing agent and H(2)O(2) or O(2) as a cosubstrate. This Botryotinia fuckeliana (strain B05.10) (Noble rot fungus) protein is AA9 family lytic polysaccharide monooxygenase I.